The sequence spans 539 residues: Peptide chain release factor 3 (539 aa).

The tr-type G domain maps to 14 to 283; the sequence is EKRRNFAIIS…AFLEYALQPE (270 aa). Residues 23–30, 91–95, and 145–148 contribute to the GTP site; these read SHPDAGKT, DTPGH, and NKLD.

This sequence belongs to the TRAFAC class translation factor GTPase superfamily. Classic translation factor GTPase family. PrfC subfamily.

The protein resides in the cytoplasm. Functionally, increases the formation of ribosomal termination complexes and stimulates activities of RF-1 and RF-2. It binds guanine nucleotides and has strong preference for UGA stop codons. It may interact directly with the ribosome. The stimulation of RF-1 and RF-2 is significantly reduced by GTP and GDP, but not by GMP. This is Peptide chain release factor 3 from Rippkaea orientalis (strain PCC 8801 / RF-1) (Cyanothece sp. (strain PCC 8801)).